A 607-amino-acid chain; its full sequence is Glutamine--fructose-6-phosphate aminotransferase [isomerizing] (607 aa).

Catalysis depends on C2, which acts as the Nucleophile; for GATase activity. One can recognise a Glutamine amidotransferase type-2 domain in the interval 2–218 (CGIIGYSGSK…DGDVVLVTKD (217 aa)). SIS domains follow at residues 280 to 424 (FDEQ…KLGK) and 457 to 597 (IAKK…VDKP). Residue K602 is the For Fru-6P isomerization activity of the active site.

Homodimer.

It localises to the cytoplasm. The enzyme catalyses D-fructose 6-phosphate + L-glutamine = D-glucosamine 6-phosphate + L-glutamate. Its function is as follows. Catalyzes the first step in hexosamine metabolism, converting fructose-6P into glucosamine-6P using glutamine as a nitrogen source. The polypeptide is Glutamine--fructose-6-phosphate aminotransferase [isomerizing] (Fusobacterium nucleatum subsp. nucleatum (strain ATCC 25586 / DSM 15643 / BCRC 10681 / CIP 101130 / JCM 8532 / KCTC 2640 / LMG 13131 / VPI 4355)).